The primary structure comprises 734 residues: Photosystem I P700 chlorophyll a apoprotein A2 (734 aa).

8 consecutive transmembrane segments (helical) span residues 46–69 (IFAS…FHVA), 135–158 (LYTG…LHLQ), 175–199 (LNHH…HVAI), 273–291 (IAHH…GHMY), 330–353 (IHFQ…QHMY), 369–395 (AALY…IFFI), 417–439 (AIIS…LYVH), and 517–535 (FLVH…LILV). Cys-559 and Cys-568 together coordinate [4Fe-4S] cluster. 2 consecutive transmembrane segments (helical) span residues 575–596 (AFYL…YWHW) and 643–665 (LSVW…MFLI). Chlorophyll a is bound by residues His-654, Met-662, and Tyr-670. Residue Trp-671 participates in phylloquinone binding. A helical membrane pass occupies residues 707–727 (LVGLAHFSVGYIFTYAAFLIA).

Belongs to the PsaA/PsaB family. As to quaternary structure, the PsaA/B heterodimer binds the P700 chlorophyll special pair and subsequent electron acceptors. PSI consists of a core antenna complex that captures photons, and an electron transfer chain that converts photonic excitation into a charge separation. The eukaryotic PSI reaction center is composed of at least 11 subunits. The cofactor is P700 is a chlorophyll a/chlorophyll a' dimer, A0 is one or more chlorophyll a, A1 is one or both phylloquinones and FX is a shared 4Fe-4S iron-sulfur center..

The protein resides in the plastid. It localises to the chloroplast thylakoid membrane. It catalyses the reaction reduced [plastocyanin] + hnu + oxidized [2Fe-2S]-[ferredoxin] = oxidized [plastocyanin] + reduced [2Fe-2S]-[ferredoxin]. In terms of biological role, psaA and PsaB bind P700, the primary electron donor of photosystem I (PSI), as well as the electron acceptors A0, A1 and FX. PSI is a plastocyanin-ferredoxin oxidoreductase, converting photonic excitation into a charge separation, which transfers an electron from the donor P700 chlorophyll pair to the spectroscopically characterized acceptors A0, A1, FX, FA and FB in turn. Oxidized P700 is reduced on the lumenal side of the thylakoid membrane by plastocyanin. In Eucalyptus globulus subsp. globulus (Tasmanian blue gum), this protein is Photosystem I P700 chlorophyll a apoprotein A2.